Here is a 158-residue protein sequence, read N- to C-terminus: Protein EOLA2 (158 aa).

Positions 6 to 92 (LSFRQPYAGF…IAGLVDIGET (87 aa)) constitute an ASCH domain.

The protein belongs to the EOLA family.

The protein is Protein EOLA2 of Homo sapiens (Human).